The primary structure comprises 209 residues: Superoxide dismutase [Mn/Fe] (209 aa).

H38, H90, D172, and H176 together coordinate Fe(3+). Positions 38, 90, 172, and 176 each coordinate Mn(2+).

The protein belongs to the iron/manganese superoxide dismutase family. Requires Mn(2+) as cofactor. It depends on Fe(3+) as a cofactor.

The catalysed reaction is 2 superoxide + 2 H(+) = H2O2 + O2. Destroys superoxide anion radicals which are normally produced within the cells and which are toxic to biological systems. Catalyzes the dismutation of superoxide anion radicals into O2 and H2O2 by successive reduction and oxidation of the transition metal ion at the active site. The sequence is that of Superoxide dismutase [Mn/Fe] (sodB) from Rickettsia typhi (strain ATCC VR-144 / Wilmington).